The sequence spans 186 residues: Ribosome-recycling factor (186 aa).

Belongs to the RRF family.

The protein localises to the cytoplasm. In terms of biological role, responsible for the release of ribosomes from messenger RNA at the termination of protein biosynthesis. May increase the efficiency of translation by recycling ribosomes from one round of translation to another. The polypeptide is Ribosome-recycling factor (Bartonella henselae (strain ATCC 49882 / DSM 28221 / CCUG 30454 / Houston 1) (Rochalimaea henselae)).